The following is a 124-amino-acid chain: Holo-[acyl-carrier-protein] synthase (124 aa).

Mg(2+) is bound by residues aspartate 5 and glutamate 51.

It belongs to the P-Pant transferase superfamily. AcpS family. It depends on Mg(2+) as a cofactor.

It localises to the cytoplasm. The catalysed reaction is apo-[ACP] + CoA = holo-[ACP] + adenosine 3',5'-bisphosphate + H(+). In terms of biological role, transfers the 4'-phosphopantetheine moiety from coenzyme A to a Ser of acyl-carrier-protein. The protein is Holo-[acyl-carrier-protein] synthase of Hydrogenobaculum sp. (strain Y04AAS1).